A 297-amino-acid chain; its full sequence is ATP synthase gamma chain (297 aa).

This sequence belongs to the ATPase gamma chain family. F-type ATPases have 2 components, CF(1) - the catalytic core - and CF(0) - the membrane proton channel. CF(1) has five subunits: alpha(3), beta(3), gamma(1), delta(1), epsilon(1). CF(0) has three main subunits: a, b and c.

It localises to the cell membrane. Functionally, produces ATP from ADP in the presence of a proton gradient across the membrane. The gamma chain is believed to be important in regulating ATPase activity and the flow of protons through the CF(0) complex. This chain is ATP synthase gamma chain, found in Renibacterium salmoninarum (strain ATCC 33209 / DSM 20767 / JCM 11484 / NBRC 15589 / NCIMB 2235).